A 256-amino-acid chain; its full sequence is Small ribosomal subunit protein eS1 (256 aa).

Ala-2 is subject to N-acetylalanine; partial.

Belongs to the eukaryotic ribosomal protein eS1 family. Component of the small ribosomal subunit. Mature ribosomes consist of a small (40S) and a large (60S) subunit. The 40S subunit contains about 33 different proteins and 1 molecule of RNA (18S). The 60S subunit contains about 49 different proteins and 3 molecules of RNA (25S, 5.8S and 5S).

Its subcellular location is the cytoplasm. The sequence is that of Small ribosomal subunit protein eS1 from Postia placenta (strain ATCC 44394 / Madison 698-R) (Brown rot fungus).